Here is a 552-residue protein sequence, read N- to C-terminus: MEKVQQTIRAPRGTELQTKGWVQEAALRMLMNNLDPEVAEKPEELVVYGGIGRAARNWESYQAIVDSLKTLESDETLLVQSGKPVAIFKSHEDAPRVLLANSNLVPKWANWDHFRELEKKGLMMYGQMTAGSWIYIGTQGILQGTYETFGEAARQHFDGSLKGTLTLTAGLGGMGGAQPLAVTMNGGVVIAIDVDKRSIDRRIEKRYCDMYTESLEEALTVANEYKEKKEPISIGLLGNAAEILPELVKRDITPDLVTDQTSAHDPLNGYIPVGYTLEEAAKLREKDPERYVQLSKESMTKHVEAMLAMQEKGAITFDYGNNIRQVAFDEGLKNAFDFPGFVPAFIRPLFCEGKGPFRWVALSGDPEDIYKTDEVILREFADNEHLCNWIRMARQQVEFQGLPSRICWLGYGERAKFGRIINEMVANGELSAPIVIGRDHLDCGSVASPNRETEAMKDGSDAVADWPILNALINSVNGASWVSVHHGGGVGMGYSLHAGMVIVADGTEAAAKRIERVLTSDPGMGVVRHVDAGYDLAVETAKEKGVNIPMMK.

NAD(+)-binding positions include 49 to 50, glutamine 127, 173 to 175, aspartate 193, 239 to 240, 260 to 264, 270 to 271, and tyrosine 319; these read GG, GMG, NA, QTSAH, and YI. Cysteine 407 is an active-site residue. Glycine 489 is a binding site for NAD(+).

The protein belongs to the urocanase family. NAD(+) serves as cofactor.

It localises to the cytoplasm. It catalyses the reaction 4-imidazolone-5-propanoate = trans-urocanate + H2O. The protein operates within amino-acid degradation; L-histidine degradation into L-glutamate; N-formimidoyl-L-glutamate from L-histidine: step 2/3. In terms of biological role, catalyzes the conversion of urocanate to 4-imidazolone-5-propionate. This Bacillus cereus (strain B4264) protein is Urocanate hydratase.